We begin with the raw amino-acid sequence, 262 residues long: Cap-specific mRNA (nucleoside-2'-O-)-methyltransferase (262 aa).

In terms of domain architecture, RrmJ-type SAM-dependent 2'-O-MTase spans 34–226 (TRRPRCWRKL…ERYLICFNKL (193 aa)). Positions 67 and 140 each coordinate S-adenosyl-L-methionine. Lysine 180 serves as the catalytic Proton acceptor.

The catalysed reaction is a 5'-end (N(7)-methyl 5'-triphosphoguanosine)-ribonucleoside in mRNA + S-adenosyl-L-methionine = a 5'-end (N(7)-methyl 5'-triphosphoguanosine)-(2'-O-methyl-ribonucleoside) in mRNA + S-adenosyl-L-homocysteine + H(+). Functionally, S-adenosyl-L-methionine-dependent methyltransferase that mediates mRNA cap 2'-O-ribose methylation to the 5'-cap structure of late viral transcripts. In Lepidoptera (butterflies and moths), this protein is Cap-specific mRNA (nucleoside-2'-O-)-methyltransferase.